We begin with the raw amino-acid sequence, 249 residues long: MGLPRPGLWLKRLWVLVQVAVEVAVGKVLMTLFPERVKQNILAMGQKTGIAQNPNFAQDSWIPTFFSTQYFWFVLKVRWQRLEDATEPGGLAPNCSVVRLSGQQCSVWDFMRGNRPLVLNFGSCTUPSFLSKFDQFKRLIQDFSSIADFLIIYIEEAHASDGWAFKNNVDIKNHRNLQDRLRAASLLLARSPQCPVVVDTMQNQSSQLYAALPERLYVLRQGRILYKGESGPWNYNPEEVRAVLEELHS.

Over Met1–Arg12 the chain is Extracellular. Residues Leu13–Phe33 form a helical; Signal-anchor for type III membrane protein membrane-spanning segment. Topologically, residues Pro34–Ser249 are cytoplasmic. Sec126 is a catalytic residue. Sec126 is a non-standard amino acid (selenocysteine).

This sequence belongs to the iodothyronine deiodinase family. Predominantly monomer. Can form homodimers but homodimerization is not essential for enzyme activity.

The protein resides in the cell membrane. Its subcellular location is the endoplasmic reticulum membrane. It is found in the basolateral cell membrane. It carries out the reaction 3,3',5-triiodo-L-thyronine + iodide + A + H(+) = L-thyroxine + AH2. It catalyses the reaction 3,3',5'-triiodo-L-thyronine + iodide + A + H(+) = L-thyroxine + AH2. The enzyme catalyses 3,3'-diiodo-L-thyronine + iodide + A + H(+) = 3,3',5'-triiodo-L-thyronine + AH2. The catalysed reaction is 3,3'-diiodo-L-thyronine + iodide + A + H(+) = 3,3',5-triiodo-L-thyronine + AH2. It carries out the reaction 3'-iodo-L-thyronine + iodide + A + H(+) = 3',5'-diiodo-L-thyronine + AH2. It catalyses the reaction 3-iodo-L-thyronine + iodide + A + H(+) = 3,5-diiodo-L-thyronine + AH2. The enzyme catalyses 3-iodo-L-thyronine + iodide + A + H(+) = 3,3'-diiodo-L-thyronine + AH2. The catalysed reaction is 3,3'-diiodothyronamine + iodide + A + H(+) = 3,3',5'-triiodothyronamine + AH2. It carries out the reaction 3'-iodothyronamine + iodide + A + H(+) = 3',5'-diiodothyronamine + AH2. It catalyses the reaction 3-iodothyronamine + iodide + A + H(+) = 3,3'-diiodothyronamine + AH2. The enzyme catalyses 3,3'-diiodothyronamine + iodide + A + H(+) = 3,3',5-triiodothyronamine + AH2. The catalysed reaction is 3-iodothyronamine + iodide + A + H(+) = 3,5-diiodothyronamine + AH2. It carries out the reaction 3,3'-diiodo-L-thyronine sulfate + iodide + A + H(+) = 3,3',5'-triiodo-L-thyronine sulfate + AH2. It catalyses the reaction 3,3',5'-triiodo-L-thyronine sulfate + iodide + A + H(+) = L-thyroxine sulfate + AH2. The enzyme catalyses 3,3'-diiodo-L-thyronine sulfate + iodide + A + H(+) = 3,3',5-triiodo-L-thyronine sulfate + AH2. In terms of biological role, plays a crucial role in the metabolism of thyroid hormones (TH) and has specific roles in TH activation and inactivation by deiodination. Catalyzes the deiodination of L-thyroxine (T4) to 3,5,3'-triiodothyronine (T3) via outer-ring deiodination (ORD) and of T4 to 3,3',5'-triiodothyronine (rT3) via inner-ring deiodination (IRD). Catalyzes the deiodiantion of rT3 to 3,3'-diiodothyronine (3,3'-T2) and 3',5'-diiodothyronine (3',5'-T2) to 3'-monoiodothyronine (3'-T1) via ORD. Catalyzes the deiodination of T3 to 3,3'-T2, 3,5-diiodothyronine (3,5-T2) to 3-monoiodothyronine (3-T1) and 3,3'-T2 to 3-T1 via IRD. Catalyzes the phenolic ring deiodinations of 3,3',5'-triiodothyronamine, 3',5'-diiodothyronamine and 3,3'-diiodothyronamine as well as tyrosyl ring deiodinations of 3,5,3'-triiodothyronamine and 3,5-diiodothyronamine. Catalyzes the deiodination of L-thyroxine sulfate and 3,3',5-triiodo-L-thyronine sulfate via IRD and of 3,3',5'-triiodo-L-thyronine sulfate via ORD. This is Type I iodothyronine deiodinase (DIO1) from Oryctolagus cuniculus (Rabbit).